Here is a 118-residue protein sequence, read N- to C-terminus: Small ribosomal subunit protein uS13 (118 aa).

The tract at residues 93–118 (RSLPVRGQRSKTNARTRKGPRKPIKK) is disordered.

It belongs to the universal ribosomal protein uS13 family. In terms of assembly, part of the 30S ribosomal subunit. Forms a loose heterodimer with protein S19. Forms two bridges to the 50S subunit in the 70S ribosome.

Located at the top of the head of the 30S subunit, it contacts several helices of the 16S rRNA. In the 70S ribosome it contacts the 23S rRNA (bridge B1a) and protein L5 of the 50S subunit (bridge B1b), connecting the 2 subunits; these bridges are implicated in subunit movement. Contacts the tRNAs in the A and P-sites. The polypeptide is Small ribosomal subunit protein uS13 (Teredinibacter turnerae (strain ATCC 39867 / T7901)).